The following is a 91-amino-acid chain: Small integral membrane protein 12-B (91 aa).

The chain crosses the membrane as a helical span at residues 12–34 (YAPYITFPVAFVVGAVGYQLEWF).

It belongs to the SMIM12 family.

The protein resides in the membrane. The protein is Small integral membrane protein 12-B (smim12-b) of Xenopus laevis (African clawed frog).